Consider the following 256-residue polypeptide: MSEKRVEKKLIHYVKKALNDYRMINTGDRVMVCLSGGKDSYTLLSLLNSIRIEGNYKFDIFAFVLDQSQPGWDDSALRGWLDDKKISYEILTRDTYSIVKEKIPAGKTYCSLCSRLRRGIIYRYAEEQGFSKIALGHHRDDLIQTLLMSVFYNGQIRSMPPKLLSDNKRHVLIRPLAYCQERDIIKYAMEQQFPLIPCNLCGSQKNLMRQRVKRLISDLAKENPKVPSNILRALSNIKPSQLMDHELWNFRELNVD.

The short motif at 35–40 (SGGKDS) is the PP-loop motif element. 3 residues coordinate [4Fe-4S] cluster: Cys-110, Cys-113, and Cys-201.

Belongs to the TtcA family. As to quaternary structure, homodimer. It depends on Mg(2+) as a cofactor. [4Fe-4S] cluster is required as a cofactor.

Its subcellular location is the cytoplasm. It carries out the reaction cytidine(32) in tRNA + S-sulfanyl-L-cysteinyl-[cysteine desulfurase] + AH2 + ATP = 2-thiocytidine(32) in tRNA + L-cysteinyl-[cysteine desulfurase] + A + AMP + diphosphate + H(+). The protein operates within tRNA modification. Functionally, catalyzes the ATP-dependent 2-thiolation of cytidine in position 32 of tRNA, to form 2-thiocytidine (s(2)C32). The sulfur atoms are provided by the cysteine/cysteine desulfurase (IscS) system. This is tRNA-cytidine(32) 2-sulfurtransferase from Coxiella burnetii (strain CbuG_Q212) (Coxiella burnetii (strain Q212)).